Reading from the N-terminus, the 207-residue chain is LexA repressor (207 aa).

A DNA-binding region (H-T-H motif) is located at residues 28–48; it reads RAEIAQKLGFKSANAAEEHLK. Catalysis depends on for autocatalytic cleavage activity residues Ser-124 and Lys-161.

This sequence belongs to the peptidase S24 family. In terms of assembly, homodimer.

It catalyses the reaction Hydrolysis of Ala-|-Gly bond in repressor LexA.. Represses a number of genes involved in the response to DNA damage (SOS response), including recA and lexA. In the presence of single-stranded DNA, RecA interacts with LexA causing an autocatalytic cleavage which disrupts the DNA-binding part of LexA, leading to derepression of the SOS regulon and eventually DNA repair. The sequence is that of LexA repressor from Aeromonas hydrophila subsp. hydrophila (strain ATCC 7966 / DSM 30187 / BCRC 13018 / CCUG 14551 / JCM 1027 / KCTC 2358 / NCIMB 9240 / NCTC 8049).